Here is a 72-residue protein sequence, read N- to C-terminus: SRY-related protein ADW5 (72 aa).

Residues 1-69 (VKRPMNAFMV…KHMADYPDYK (69 aa)) constitute a DNA-binding region (HMG box).

The protein localises to the nucleus. The sequence is that of SRY-related protein ADW5 from Alligator mississippiensis (American alligator).